The primary structure comprises 485 residues: Cysteine--tRNA ligase (485 aa).

Cysteine 27 contributes to the Zn(2+) binding site. Positions 29–39 match the 'HIGH' region motif; the sequence is ITAYDLCHIGH. Residues cysteine 208, histidine 233, and glutamate 237 each contribute to the Zn(2+) site. Residues 265–269 carry the 'KMSKS' region motif; sequence KMSKS. Residue lysine 268 participates in ATP binding.

It belongs to the class-I aminoacyl-tRNA synthetase family. Monomer. Zn(2+) is required as a cofactor.

The protein resides in the cytoplasm. The catalysed reaction is tRNA(Cys) + L-cysteine + ATP = L-cysteinyl-tRNA(Cys) + AMP + diphosphate. The sequence is that of Cysteine--tRNA ligase from Solidesulfovibrio magneticus (strain ATCC 700980 / DSM 13731 / RS-1) (Desulfovibrio magneticus).